A 393-amino-acid polypeptide reads, in one-letter code: Endoplasmic reticulum junction formation protein lunapark-A (393 aa).

Residues 1 to 45 (MGAVVSRWRAKPSTVEVLEGLDKDIQVLEEYREKNHKQLKLWVYR) lie on the Cytoplasmic side of the membrane. The helical transmembrane segment at 46–66 (LLLYSALLYLMACAVVYAWYI) threads the bilayer. Residues 67–69 (PER) lie on the Lumenal side of the membrane. Residues 70 to 90 (MIGKLIVASPFLLFPLLIWLL) form a helical membrane-spanning segment. Residues 91–393 (RKLLIILYNK…EQDVSAMEVE (303 aa)) lie on the Cytoplasmic side of the membrane. A coiled-coil region spans residues 95–130 (IILYNKRTERNNEKLEELKAEKKKILEQVMETETYK). The interval 146 to 209 (KLELETQPIG…PPEKGLSAST (64 aa)) is disordered. Pro residues predominate over residues 176–190 (TGRPPPVPVPGPSVP). A C4-type; plays a role in ER morphology zinc finger spans residues 269–294 (CQQCLSHNGMALKEEFEYIAFRCAYC). The segment at 314-393 (AAEAKTSQDP…EQDVSAMEVE (80 aa)) is disordered. 2 stretches are compositionally biased toward basic and acidic residues: residues 340–353 (ESKE…KAGD) and 364–383 (EEMK…KSDG).

Belongs to the lunapark family. In terms of assembly, homodimer; homodimerization requires the C4-type zinc finger motif and decreases during mitosis in a phosphorylation-dependent manner. In terms of processing, phosphorylated. Phosphorylation occurs during interphase. Phosphorylation also occurs during mitosis; these phosphorylations reduce both its homodimerization and the ER three-way tubular junction formation.

The protein resides in the endoplasmic reticulum membrane. Endoplasmic reticulum (ER)-shaping membrane protein that plays a role in determining ER morphology. Involved in the stabilization of nascent three-way ER tubular junctions within the ER network. May also play a role as a curvature-stabilizing protein within three-way ER tubular junction network. This Danio rerio (Zebrafish) protein is Endoplasmic reticulum junction formation protein lunapark-A (lnpka).